A 348-amino-acid polypeptide reads, in one-letter code: Arginine kinase Oct f 2 (348 aa).

Residues 1 to 83 (MAEELFKTLQ…LDAVIMDYHK (83 aa)) enclose the Phosphagen kinase N-terminal domain. 56–60 (GVGIY) serves as a coordination point for substrate. In terms of domain architecture, Phosphagen kinase C-terminal spans 111 to 347 (MIVSTRVRVG…NEIIREETNS (237 aa)). Residues 114-118 (STRVR) and His177 contribute to the ATP site. Position 217 (Glu217) interacts with substrate. Arg221 serves as a coordination point for ATP. Cys263 is a substrate binding site. ATP contacts are provided by residues 272–276 (RASVH) and 300–305 (RGIHGE). Glu305 is a binding site for substrate.

It belongs to the ATP:guanido phosphotransferase family. Muscle (at protein level).

It catalyses the reaction L-arginine + ATP = N(omega)-phospho-L-arginine + ADP + H(+). Its function is as follows. Catalyzes the reversible transfer of high energy ATP gamma-phosphate group to L-arginine. In Amphioctopus fangsiao (Ocellated octopus), this protein is Arginine kinase Oct f 2.